The chain runs to 500 residues: Centrosomal protein of 57 kDa (500 aa).

The span at 1-17 (MAAASVSAASGSHLSNS) shows a compositional bias: low complexity. Disordered regions lie at residues 1–34 (MAAA…HSSS) and 43–62 (KPFL…LAYP). Positions 18–34 (FAEPSRSNGSMVRHSSS) are enriched in polar residues. 2 positions are modified to phosphoserine: Ser53 and Ser55. The interval 58 to 239 (TLAYPESNSR…KAAELQTGLE (182 aa)) is centrosome localization domain (CLD). 2 coiled-coil regions span residues 63–242 (ESNS…ETNR) and 392–492 (ELKD…NSLQ). Residues 277-491 (GAQPHYRLCL…KDMQSIQNSL (215 aa)) form a mediates interaction with microtubules region. The span at 434-450 (KKELKATKKTLDEERNS) shows a compositional bias: basic and acidic residues. A disordered region spans residues 434–472 (KKELKATKKTLDEERNSSSRSGITGTTNKKDFMKLRPGE). A compositionally biased stretch (polar residues) spans 451–460 (SSRSGITGTT). Residues 461 to 471 (NKKDFMKLRPG) are compositionally biased toward basic and acidic residues.

This sequence belongs to the translokin family. In terms of assembly, homodimer and homooligomer. Interacts with microtubules. Interacts with FGF2 and RAP80. Does not interact with FGF1 or FGF2 isoform 24 kDa. Ubiquitous.

Its subcellular location is the nucleus. The protein resides in the cytoplasm. The protein localises to the cytoskeleton. It localises to the microtubule organizing center. It is found in the centrosome. Functionally, centrosomal protein which may be required for microtubule attachment to centrosomes. May act by forming ring-like structures around microtubules. Mediates nuclear translocation and mitogenic activity of the internalized growth factor FGF2, but that of FGF1. The polypeptide is Centrosomal protein of 57 kDa (CEP57) (Homo sapiens (Human)).